Consider the following 268-residue polypeptide: Zinc transporter ZupT (268 aa).

Helical transmembrane passes span 5–25, 36–56, 75–95, 124–144, 157–177, 187–207, 211–231, and 248–268; these read ILFAFALTLFAGLSTGVGSLI, VLTISLGFSAGVMIYVAMIEI, VVTVLSFFAGIFLIALIDKLI, MGLFSAVAIGIHNFPEGLATF, IAVAIAIHNIPEGLAVSAPIF, FILSFLSGLAEPVGALIGYFL, FFSPSLFGVVFGAVAGIMVYI, and FAIGGVIAGMVVMAISLLLFT. Residues Asn-136 and Glu-139 each contribute to the Fe(2+) site. Zn(2+) contacts are provided by Glu-139 and His-164. 3 residues coordinate Fe(2+): Asn-165, Glu-168, and Glu-197. Glu-168 serves as a coordination point for Zn(2+).

Belongs to the ZIP transporter (TC 2.A.5) family. ZupT subfamily.

The protein localises to the cell membrane. The catalysed reaction is Zn(2+)(in) = Zn(2+)(out). Its function is as follows. Mediates zinc uptake. May also transport other divalent cations. This chain is Zinc transporter ZupT, found in Chlorobium chlorochromatii (strain CaD3).